We begin with the raw amino-acid sequence, 137 residues long: Large ribosomal subunit protein uL16 (137 aa).

This sequence belongs to the universal ribosomal protein uL16 family. In terms of assembly, part of the 50S ribosomal subunit.

Functionally, binds 23S rRNA and is also seen to make contacts with the A and possibly P site tRNAs. The sequence is that of Large ribosomal subunit protein uL16 from Baumannia cicadellinicola subsp. Homalodisca coagulata.